The sequence spans 2359 residues: Pre-mRNA-processing-splicing factor 8A (2359 aa).

Positions 1-54 are disordered; that stretch reads MWNNNDGMPLAPPGTGGSMMPPPPAAHPSYTALPPPSNPTPPVEPTPEEAEAKL. Residues 33–45 are compositionally biased toward pro residues; it reads LPPPSNPTPPVEP. The region spanning 2127 to 2258 is the MPN domain; it reads TYIMPKNILK…LTSYKLTQTG (132 aa).

As to quaternary structure, interacts with CLO.

The protein localises to the nucleus. In terms of biological role, functions as a scaffold that mediates the ordered assembly of spliceosomal proteins and snRNAs. Required for the assembly of the U4/U6-U5 tri-snRNP complex. Required for embryo development. Required for splicing efficiency of COOLAIR introns and usage of the proximal poly(A) site. COOLAIR is a set of long non-coding antisense transcripts produced at the FLOWERING LOCUS C (FLC). COOLAIR initiates just downstream of the major sense transcript poly(A) site and terminates either early or extends into the FLC promoter region. Splicing of COOLAIR by PRP8A is functionally important for FLC regulation. This is Pre-mRNA-processing-splicing factor 8A from Arabidopsis thaliana (Mouse-ear cress).